The following is a 445-amino-acid chain: 3-phosphoshikimate 1-carboxyvinyltransferase (445 aa).

The 3-phosphoshikimate site is built by Lys28, Ser29, and Arg33. Phosphoenolpyruvate is bound at residue Lys28. Phosphoenolpyruvate is bound by residues Gly101 and Arg129. 3-phosphoshikimate-binding residues include Ser175, Gln177, Asp328, and Lys355. Gln177 contacts phosphoenolpyruvate. The Proton acceptor role is filled by Asp328. The phosphoenolpyruvate site is built by Arg359 and Arg402.

This sequence belongs to the EPSP synthase family. Monomer.

It is found in the cytoplasm. The catalysed reaction is 3-phosphoshikimate + phosphoenolpyruvate = 5-O-(1-carboxyvinyl)-3-phosphoshikimate + phosphate. It functions in the pathway metabolic intermediate biosynthesis; chorismate biosynthesis; chorismate from D-erythrose 4-phosphate and phosphoenolpyruvate: step 6/7. Its function is as follows. Catalyzes the transfer of the enolpyruvyl moiety of phosphoenolpyruvate (PEP) to the 5-hydroxyl of shikimate-3-phosphate (S3P) to produce enolpyruvyl shikimate-3-phosphate and inorganic phosphate. This Rhodopseudomonas palustris (strain HaA2) protein is 3-phosphoshikimate 1-carboxyvinyltransferase.